Here is a 271-residue protein sequence, read N- to C-terminus: Hydroxyethylthiazole kinase (271 aa).

Substrate is bound at residue Met-50. 2 residues coordinate ATP: Arg-126 and Thr-172. Position 199 (Gly-199) interacts with substrate.

Belongs to the Thz kinase family. Requires Mg(2+) as cofactor.

It catalyses the reaction 5-(2-hydroxyethyl)-4-methylthiazole + ATP = 4-methyl-5-(2-phosphooxyethyl)-thiazole + ADP + H(+). The protein operates within cofactor biosynthesis; thiamine diphosphate biosynthesis; 4-methyl-5-(2-phosphoethyl)-thiazole from 5-(2-hydroxyethyl)-4-methylthiazole: step 1/1. In terms of biological role, catalyzes the phosphorylation of the hydroxyl group of 4-methyl-5-beta-hydroxyethylthiazole (THZ). The sequence is that of Hydroxyethylthiazole kinase from Akkermansia muciniphila (strain ATCC BAA-835 / DSM 22959 / JCM 33894 / BCRC 81048 / CCUG 64013 / CIP 107961 / Muc).